A 282-amino-acid chain; its full sequence is NADPH-dependent 7-cyano-7-deazaguanine reductase (282 aa).

A substrate-binding site is contributed by Ile88–Ser90. Ser90–Lys91 is an NADPH binding site. Cys190 (thioimide intermediate) is an active-site residue. The Proton donor role is filled by Asp197. Position 229–230 (His229–Glu230) interacts with substrate. Position 258–259 (Arg258–Gly259) interacts with NADPH.

It belongs to the GTP cyclohydrolase I family. QueF type 2 subfamily. As to quaternary structure, homodimer.

Its subcellular location is the cytoplasm. The catalysed reaction is 7-aminomethyl-7-carbaguanine + 2 NADP(+) = 7-cyano-7-deazaguanine + 2 NADPH + 3 H(+). It participates in tRNA modification; tRNA-queuosine biosynthesis. In terms of biological role, catalyzes the NADPH-dependent reduction of 7-cyano-7-deazaguanine (preQ0) to 7-aminomethyl-7-deazaguanine (preQ1). In Escherichia coli (strain SMS-3-5 / SECEC), this protein is NADPH-dependent 7-cyano-7-deazaguanine reductase.